We begin with the raw amino-acid sequence, 73 residues long: Translation initiation factor IF-1 (73 aa).

The 73-residue stretch at 1 to 73 (MANKEELIEF…TKGRITYRAR (73 aa)) folds into the S1-like domain.

Belongs to the IF-1 family. As to quaternary structure, component of the 30S ribosomal translation pre-initiation complex which assembles on the 30S ribosome in the order IF-2 and IF-3, IF-1 and N-formylmethionyl-tRNA(fMet); mRNA recruitment can occur at any time during PIC assembly.

Its subcellular location is the cytoplasm. One of the essential components for the initiation of protein synthesis. Stabilizes the binding of IF-2 and IF-3 on the 30S subunit to which N-formylmethionyl-tRNA(fMet) subsequently binds. Helps modulate mRNA selection, yielding the 30S pre-initiation complex (PIC). Upon addition of the 50S ribosomal subunit IF-1, IF-2 and IF-3 are released leaving the mature 70S translation initiation complex. This is Translation initiation factor IF-1 from Acinetobacter baumannii (strain ATCC 17978 / DSM 105126 / CIP 53.77 / LMG 1025 / NCDC KC755 / 5377).